Consider the following 434-residue polypeptide: Histidinol dehydrogenase (434 aa).

NAD(+) contacts are provided by Y130, Q188, and N211. The substrate site is built by S237, Q259, and H262. Residues Q259 and H262 each coordinate Zn(2+). Active-site proton acceptor residues include E326 and H327. Substrate is bound by residues H327, D360, E414, and H419. D360 contacts Zn(2+). Residue H419 coordinates Zn(2+).

The protein belongs to the histidinol dehydrogenase family. In terms of assembly, homodimer. Zn(2+) serves as cofactor.

It carries out the reaction L-histidinol + 2 NAD(+) + H2O = L-histidine + 2 NADH + 3 H(+). The protein operates within amino-acid biosynthesis; L-histidine biosynthesis; L-histidine from 5-phospho-alpha-D-ribose 1-diphosphate: step 9/9. Catalyzes the sequential NAD-dependent oxidations of L-histidinol to L-histidinaldehyde and then to L-histidine. The polypeptide is Histidinol dehydrogenase (Shigella sonnei (strain Ss046)).